A 176-amino-acid chain; its full sequence is MAMSFEWPWQYRFPPFFTLQPNVDTRQKQLAAWCSLVLSFCRLHKQSSMTVMEAQESPLFNNVKLQRKLPVESIQIVLEELRKKGNLEWLDKSKSSFLIMWRRPEEWGKLIYQWVSRSGQNNSVFTLYELTNGEDTEDEEFHGLDEATLLRALQALQQEHKAEIITVSDGRGVKFF.

It belongs to the VPS25 family. In terms of assembly, component of a complex at least composed of ELL, SNF8/EAP30, VPS25/EAP20 and VPS36/EAP45. Component of the endosomal sorting complex required for transport II (ESCRT-II), composed of SNF8, VPS36 and 2 copies of VPS25. Interacts with CFTR; the interaction requires misfolded CFTR. Interacts (via C-terminal half) with the ESCRT-III subunit CHMP6 (via N-terminal half). As to expression, expressed at the mRNA level in kidney, liver, pancreas, and placenta. Lower levels of expression are found in heart, skeletal muscle, brain and lung.

The protein resides in the cytoplasm. It localises to the endosome membrane. It is found in the nucleus. Its subcellular location is the nucleoplasm. In terms of biological role, component of the ESCRT-II complex (endosomal sorting complex required for transport II), which is required for multivesicular body (MVB) formation and sorting of endosomal cargo proteins into MVBs. The MVB pathway mediates delivery of transmembrane proteins into the lumen of the lysosome for degradation. The ESCRT-II complex is probably involved in the recruitment of the ESCRT-III complex. The ESCRT-II complex may also play a role in transcription regulation, possibly via its interaction with ELL. The ESCRT-II complex may be involved in facilitating the budding of certain RNA viruses. The protein is Vacuolar protein-sorting-associated protein 25 (VPS25) of Homo sapiens (Human).